The chain runs to 261 residues: Phosphatidylglycerol--prolipoprotein diacylglyceryl transferase (261 aa).

The next 3 membrane-spanning stretches (helical) occupy residues 20-40, 54-74, and 94-114; these read LAIHWYAIFIVGGAALAVWLA, IIDFVLFAFPLGIVGARLYYV, and GGGAIYGSLIAGAIVLFVFSY. Residue arginine 139 participates in a 1,2-diacyl-sn-glycero-3-phospho-(1'-sn-glycerol) binding. 3 helical membrane-spanning segments follow: residues 175–195, 205–225, and 235–255; these read MPTFLFESIGTLSGFILVMVF, GDIFSFYLVWYGAVRFIVEGM, and ARVSQWLSVLLVIVGLVLFIY.

Belongs to the Lgt family.

It is found in the cell membrane. It carries out the reaction L-cysteinyl-[prolipoprotein] + a 1,2-diacyl-sn-glycero-3-phospho-(1'-sn-glycerol) = an S-1,2-diacyl-sn-glyceryl-L-cysteinyl-[prolipoprotein] + sn-glycerol 1-phosphate + H(+). The protein operates within protein modification; lipoprotein biosynthesis (diacylglyceryl transfer). Catalyzes the transfer of the diacylglyceryl group from phosphatidylglycerol to the sulfhydryl group of the N-terminal cysteine of a prolipoprotein, the first step in the formation of mature lipoproteins. This Lactococcus lactis subsp. lactis (strain IL1403) (Streptococcus lactis) protein is Phosphatidylglycerol--prolipoprotein diacylglyceryl transferase.